Consider the following 135-residue polypeptide: MTNEAYDNTTTLDPRIAQRLKHDDKGLVAAVIQQFDTKEVLMVGYMNDEAIRRTLTTGRVTFWSRSRQEYWRKGDTSGHAQYVKSFALDCDGDAILVEVDQVGAACHTGKRSCFEEGGQLPVVVGHRTKEQEGQR.

Aspartate 89 contributes to the Mg(2+) binding site. Cysteine 90 contributes to the Zn(2+) binding site. Aspartate 91 and aspartate 93 together coordinate Mg(2+). The Zn(2+) site is built by cysteine 106 and cysteine 113.

It belongs to the PRA-CH family. In terms of assembly, homodimer. It depends on Mg(2+) as a cofactor. The cofactor is Zn(2+).

It is found in the cytoplasm. The enzyme catalyses 1-(5-phospho-beta-D-ribosyl)-5'-AMP + H2O = 1-(5-phospho-beta-D-ribosyl)-5-[(5-phospho-beta-D-ribosylamino)methylideneamino]imidazole-4-carboxamide. Its pathway is amino-acid biosynthesis; L-histidine biosynthesis; L-histidine from 5-phospho-alpha-D-ribose 1-diphosphate: step 3/9. Its function is as follows. Catalyzes the hydrolysis of the adenine ring of phosphoribosyl-AMP. The sequence is that of Phosphoribosyl-AMP cyclohydrolase from Bifidobacterium adolescentis (strain ATCC 15703 / DSM 20083 / NCTC 11814 / E194a).